The sequence spans 337 residues: Eukaryotic translation initiation factor 3 subunit H (337 aa).

The region spanning 25-158 (VQIEGLAVLK…LKALKLSDSF (134 aa)) is the MPN domain. S178 is modified (phosphoserine; by ATPK1). The span at 267–278 (RRTENMARKSAG) shows a compositional bias: basic and acidic residues. The disordered stretch occupies residues 267 to 290 (RRTENMARKSAGEEPLPEEDPSNP).

Belongs to the eIF-3 subunit H family. Component of the eukaryotic translation initiation factor 3 (eIF-3) complex. Interacts directly with TIF3A1, TIF3B1, TIF3C1, TIF3E1 and TIF3F1. Associates with the CSN (COP9 signalosome) complex. Binds to CSN1, CSN7 and CSN8. Interacts with ATPK1. In response to auxin (NAA), phosphorylated at Ser-178 by ATPK1 and binds to polysomes via TOR signaling. This phosphorylation is repressed by Torin-1. Mostly expressed in roots and flowers, and, to a lower extent, in leaves, stems and siliques.

It localises to the cytoplasm. Functionally, component of the eukaryotic translation initiation factor 3 (eIF-3) complex, which is involved in protein synthesis of a specialized repertoire of mRNAs and, together with other initiation factors, stimulates binding of mRNA and methionyl-tRNAi to the 40S ribosome. The eIF-3 complex specifically targets and initiates translation of a subset of mRNAs involved in cell proliferation (Potential). Regulates translation initiation of specific 5' mRNAs harboring multiple upstream open reading frames (uORFs) in their 5' leader sequence (e.g. BETA-OHASE 2 and LHY). The sequence is that of Eukaryotic translation initiation factor 3 subunit H (TIF3H1) from Arabidopsis thaliana (Mouse-ear cress).